The following is a 106-amino-acid chain: Large ribosomal subunit protein eL30 (106 aa).

The protein belongs to the eukaryotic ribosomal protein eL30 family. In terms of assembly, component of the large ribosomal subunit. Mature ribosomes consist of a small (40S) and a large (60S) subunit. The 40S subunit contains about 32 different proteins and 1 molecule of RNA (18S). The 60S subunit contains 45 different proteins and 3 molecules of RNA (25S, 5.8S and 5S).

It localises to the cytoplasm. Functionally, component of the ribosome, a large ribonucleoprotein complex responsible for the synthesis of proteins in the cell. The small ribosomal subunit (SSU) binds messenger RNAs (mRNAs) and translates the encoded message by selecting cognate aminoacyl-transfer RNA (tRNA) molecules. The large subunit (LSU) contains the ribosomal catalytic site termed the peptidyl transferase center (PTC), which catalyzes the formation of peptide bonds, thereby polymerizing the amino acids delivered by tRNAs into a polypeptide chain. The nascent polypeptides leave the ribosome through a tunnel in the LSU and interact with protein factors that function in enzymatic processing, targeting, and the membrane insertion of nascent chains at the exit of the ribosomal tunnel. In Candida albicans (strain SC5314 / ATCC MYA-2876) (Yeast), this protein is Large ribosomal subunit protein eL30.